The chain runs to 157 residues: Arginine regulator (157 aa).

This sequence belongs to the ArgR family.

It is found in the cytoplasm. The protein operates within amino-acid degradation; L-arginine degradation via ADI pathway. Functionally, regulates the transcription of the arc operon, involved in arginine catabolism. The sequence is that of Arginine regulator (argR1) from Streptococcus pyogenes serotype M3 (strain ATCC BAA-595 / MGAS315).